The sequence spans 194 residues: 3-isopropylmalate dehydratase small subunit (194 aa).

This sequence belongs to the LeuD family. LeuD type 1 subfamily. Heterodimer of LeuC and LeuD.

The enzyme catalyses (2R,3S)-3-isopropylmalate = (2S)-2-isopropylmalate. It functions in the pathway amino-acid biosynthesis; L-leucine biosynthesis; L-leucine from 3-methyl-2-oxobutanoate: step 2/4. Its function is as follows. Catalyzes the isomerization between 2-isopropylmalate and 3-isopropylmalate, via the formation of 2-isopropylmaleate. The polypeptide is 3-isopropylmalate dehydratase small subunit (Brevibacillus brevis (strain 47 / JCM 6285 / NBRC 100599)).